Consider the following 635-residue polypeptide: Dual specificity protein kinase zak2 (635 aa).

Protein kinase domains follow at residues 9-249 and 299-585; these read WEEI…HRLI and NKDD…QIYF. Residues 15 to 23 and K45 each bind ATP; that span reads IGSCNSKSR. Residue D124 is the Proton acceptor of the active site. ATP is bound by residues 305-313 and K326; that span reads GGDGFFSVV. D427 functions as the Proton acceptor in the catalytic mechanism.

This sequence in the N-terminal section; belongs to the protein kinase superfamily. Ser/Thr protein kinase family. It in the C-terminal section; belongs to the protein kinase superfamily. TKL Tyr protein kinase family. Post-translationally, C-terminal tyrosine kinase domain is capable of autophosphorylation, in vitro. As to expression, zakA and zak2 are coexpressed in prestalk cell population, zakA is enriched in pstB populations and zak1 in pstA populations. ZakA and zak2 are coexpressed in prespore cells, zakA expression levels are 10 fold higher than zak2.

It carries out the reaction L-seryl-[protein] + ATP = O-phospho-L-seryl-[protein] + ADP + H(+). The catalysed reaction is L-threonyl-[protein] + ATP = O-phospho-L-threonyl-[protein] + ADP + H(+). It catalyses the reaction L-tyrosyl-[protein] + ATP = O-phospho-L-tyrosyl-[protein] + ADP + H(+). Positive regulator of gsk3/gskA activity required for cell pattern formation and a downstream effector of carC. The kinases, gsk3/gskA, zakA and zak2, form part of a signaling pathway that responds to extracellular cyclic AMP. The pathway has a role in transcriptional regulation; required to direct prespore/spore fates during development. Zak2 negatively regulates prestalk differentiation by regulating expression of ecmA. Phosphorylates Y-214 of gsk3/gskA, in vitro. The chain is Dual specificity protein kinase zak2 (zak2) from Dictyostelium discoideum (Social amoeba).